A 218-amino-acid polypeptide reads, in one-letter code: Cytidylate kinase (218 aa).

Residue 7–15 (GPSASGKSS) participates in ATP binding.

The protein belongs to the cytidylate kinase family. Type 1 subfamily.

It localises to the cytoplasm. It catalyses the reaction CMP + ATP = CDP + ADP. It carries out the reaction dCMP + ATP = dCDP + ADP. This is Cytidylate kinase from Borrelia hermsii (strain HS1 / DAH).